Here is a 617-residue protein sequence, read N- to C-terminus: Putative metal ion transporter C17A12.14 (617 aa).

Residues 1–141 (MPSNTSRSVP…GKNTRDQPSP (141 aa)) are disordered. Serine 105 carries the phosphoserine modification. Basic and acidic residues predominate over residues 117-136 (SHPEDIQRKEFETENGKNTR). A phosphoserine mark is found at serine 152, serine 162, serine 226, and serine 241. The next 2 membrane-spanning stretches (helical) occupy residues 560-580 (TILG…GMNV) and 590-610 (LGWF…SFIL).

Belongs to the CorA metal ion transporter (MIT) (TC 1.A.35) family. As to quaternary structure, interacts with sad1.

The protein resides in the membrane. This chain is Putative metal ion transporter C17A12.14, found in Schizosaccharomyces pombe (strain 972 / ATCC 24843) (Fission yeast).